The chain runs to 685 residues: Keratin, type II cytoskeletal 2 epidermal (685 aa).

The segment at 1–20 (MSCQISCKSRRGGGGGGGGG) is disordered. The interval 1 to 196 (MSCQISCKSR…DPEIQNVKSQ (196 aa)) is head. At Arg22 the chain carries Asymmetric dimethylarginine. Phosphoserine occurs at positions 25 and 28. Residue Arg52 is modified to Omega-N-methylarginine. Phosphoserine is present on Ser64. The tract at residues 197–232 (EREQIKTLNNKFASFIDTVRFLEQQNQVLHTKWELL) is coil 1A. The 315-residue stretch at 197–511 (EREQIKTLNN…KLLEGEECRM (315 aa)) folds into the IF rod domain. The interval 233–251 (QQLDVGTRTTNLDPVFQAY) is linker 1. The interval 252-343 (IGILKKQVDR…TLYDTELSQL (92 aa)) is coil 1B. The segment at 344–367 (QQNVTDTNVILSMDNNRNLDLDSI) is linker 12. The tract at residues 368 to 507 (IAEVQSQYEI…ATYRKLLEGE (140 aa)) is coil 2. The segment at 508-685 (ECRMSGDFSD…CGSGVTFSFR (178 aa)) is tail. The interval 532-685 (VASKAGFGSG…CGSGVTFSFR (154 aa)) is disordered. The segment covering 538–678 (FGSGGQSSGG…GSGSGEGCGS (141 aa)) has biased composition (gly residues). Arg554, Arg588, Arg603, and Arg653 each carry omega-N-methylarginine.

The protein belongs to the intermediate filament family. As to quaternary structure, heterotetramer of two type I and two type II keratins. Associates with KRT10.

It is found in the cytoplasm. Probably contributes to terminal cornification. Associated with keratinocyte activation, proliferation and keratinization. Required for maintenance of corneocytes and keratin filaments in suprabasal keratinocytes in the epidermis of the ear, potentially via moderation of expression and localization of keratins and their partner proteins. Plays a role in the establishment of the epidermal barrier on plantar skin. This Rattus norvegicus (Rat) protein is Keratin, type II cytoskeletal 2 epidermal.